The primary structure comprises 154 residues: Putative antiporter subunit mnhG2 (154 aa).

Helical transmembrane passes span 11-31 (IASI…IGIV), 51-71 (VLLT…FFSV), and 72-92 (RLLL…HLIS).

The protein belongs to the CPA3 antiporters (TC 2.A.63) subunit G family. In terms of assembly, may form a heterooligomeric complex that consists of seven subunits: mnhA2, mnhB2, mnhC2, mnhD2, mnhE2, mnhF2 and mnhG2.

The protein resides in the cell membrane. In Staphylococcus epidermidis (strain ATCC 35984 / DSM 28319 / BCRC 17069 / CCUG 31568 / BM 3577 / RP62A), this protein is Putative antiporter subunit mnhG2 (mnhG2).